Reading from the N-terminus, the 387-residue chain is Eukaryotic translation initiation factor 3 subunit M (387 aa).

Residues 181–340 (LSSKVMIELL…RKVHISSTMH (160 aa)) form the PCI domain.

Belongs to the eIF-3 subunit M family. As to quaternary structure, component of the eukaryotic translation initiation factor 3 (eIF-3) complex. The eIF-3 complex interacts with pix.

Its subcellular location is the cytoplasm. The protein resides in the golgi apparatus. Functionally, component of the eukaryotic translation initiation factor 3 (eIF-3) complex, which is involved in protein synthesis of a specialized repertoire of mRNAs and, together with other initiation factors, stimulates binding of mRNA and methionyl-tRNAi to the 40S ribosome. The eIF-3 complex specifically targets and initiates translation of a subset of mRNAs involved in cell proliferation. The protein is Eukaryotic translation initiation factor 3 subunit M of Drosophila pseudoobscura pseudoobscura (Fruit fly).